A 190-amino-acid chain; its full sequence is MNFLLSWVHWSLALLLYLHHAKWSQAAPMAEGGQKPHEVVKFMDVYQRSFCRPIETLVDIFQEYPDEIEFIFKPSCVPLMRCGGCCNDESLECVPTEEFNITMQIMRIKPHQSQHIGEMSFLQHNKCECRPKKDKARQENPCGPCSERRKHLFVQDPQTCKCSCKNTDSRCKARQLELNERTCRCDKPRR.

The signal sequence occupies residues 1–26; it reads MNFLLSWVHWSLALLLYLHHAKWSQA. 3 cysteine pairs are disulfide-bonded: Cys-51-Cys-93, Cys-82-Cys-127, and Cys-86-Cys-129. Residue Asn-100 is glycosylated (N-linked (GlcNAc...) asparagine).

The protein belongs to the PDGF/VEGF growth factor family. In terms of assembly, homodimer; disulfide-linked. Also found as heterodimer with PGF. Interacts with NRP1. Interacts with BSG. Interacts with CD82; this interaction inhibits VEGFA-mediated signaling pathway.

It localises to the secreted. Its function is as follows. Growth factor active in angiogenesis, vasculogenesis and endothelial cell growth. Induces endothelial cell proliferation, promotes cell migration, inhibits apoptosis and induces permeabilization of blood vessels. Binds to the FLT1/VEGFR1 and KDR/VEGFR2 receptors, heparan sulfate and heparin. Binding to NRP1 receptor initiates a signaling pathway needed for motor neuron axon guidance and cell body migration, including for the caudal migration of facial motor neurons from rhombomere 4 to rhombomere 6 during embryonic development. Also binds the DEAR/FBXW7-AS1 receptor. The polypeptide is Vascular endothelial growth factor A (VEGFA) (Bos taurus (Bovine)).